We begin with the raw amino-acid sequence, 382 residues long: Gap junction alpha-1 protein (382 aa).

Over 2–23 the chain is Cytoplasmic; sequence GDWSALGKLLDKVQAYSTAGGK. Residue serine 5 is modified to Phosphoserine. Residues 24-44 form a helical membrane-spanning segment; sequence VWLSVLFIFRILLLGTAVESA. Topologically, residues 45-76 are extracellular; sequence WGDEQSAFRCNTQQPGCENVCYDKSFPISHVR. Intrachain disulfides connect cysteine 54–cysteine 192 and cysteine 187–cysteine 198. Residues 77-97 traverse the membrane as a helical segment; sequence FWVLQIIFVSVPTLLYLAHVF. Residues 98 to 155 lie on the Cytoplasmic side of the membrane; sequence YVMRKEEKLNKKEEELKVAQTDGANVDMHLKQIEIKKFKYGIEEHGKVKMRGGLLRTY. Lysine 144 is covalently cross-linked (Glycyl lysine isopeptide (Lys-Gly) (interchain with G-Cter in SUMO)). A helical membrane pass occupies residues 156–176; sequence IISILFKSVFEVAFLLIQWYI. The Extracellular portion of the chain corresponds to 177-207; that stretch reads YGFSLSAVYTCKRDPCPHQVDCFLSRPTEKT. A helical transmembrane segment spans residues 208–228; that stretch reads IFIIFMLVVSLVSLALNIIEL. Residues 229 to 382 are Cytoplasmic-facing; that stretch reads FYVFFKGIKD…SRPRPDDLEI (154 aa). A Glycyl lysine isopeptide (Lys-Gly) (interchain with G-Cter in SUMO) cross-link involves residue lysine 237. Positions 244–382 are interaction with NOV; that stretch reads SDLYHATTGP…SRPRPDDLEI (139 aa). A Phosphotyrosine modification is found at tyrosine 247. 3 positions are modified to phosphoserine: serine 255, serine 257, and serine 262. Residues 264 to 382 are interaction with UBQLN4; sequence TYAYFNGCSS…SRPRPDDLEI (119 aa). Cysteine 271 carries the post-translational modification S-nitrosocysteine. Threonine 275 bears the Phosphothreonine mark. 2 positions are modified to phosphoserine: serine 306 and serine 314. A compositionally biased stretch (polar residues) spans 317–332; it reads QNRMGQAGSTISNSHA. The interval 317–382 is disordered; the sequence is QNRMGQAGST…SRPRPDDLEI (66 aa). Serine 325 is subject to Phosphoserine; by CK1. Threonine 326 carries the post-translational modification Phosphothreonine. 2 positions are modified to phosphoserine; by CK1: serine 328 and serine 330. Serine 344 and serine 365 each carry phosphoserine. A compositionally biased stretch (low complexity) spans 362–374; sequence RPSSRASSRASSR. A Phosphoserine; by PKC/PRKCG and PKC/PRKCD modification is found at serine 368. Phosphoserine is present on residues serine 369 and serine 373.

It belongs to the connexin family. Alpha-type (group II) subfamily. As to quaternary structure, a connexon is composed of a hexamer of connexins. Interacts with SGSM3. Interacts with RIC1/CIP150. Interacts with CNST and CSNK1D. Interacts (via C-terminus) with TJP1. Interacts (via C-terminus) with SRC (via SH3 domain). Interacts (not ubiquitinated) with UBQLN4 (via UBA domain). Interacts with NOV. Interacts with TMEM65. Interacts with ANK3/ANKG and PKP2. Phosphorylation at Ser-325, Ser-328 and Ser-330 by CK1 modulates gap junction assembly. Phosphorylated at Ser-368 by PRKCG; phosphorylation induces disassembly of gap junction plaques and inhibition of gap junction activity. Phosphorylation at Ser-368 by PRKCD triggers its internalization into small vesicles leading to proteasome-mediated degradation. In terms of processing, sumoylated with SUMO1, SUMO2 and SUMO3, which may regulate the level of functional Cx43 gap junctions at the plasma membrane. May be desumoylated by SENP1 or SENP2. Post-translationally, S-nitrosylation at Cys-271 is enriched at the muscle endothelial gap junction in arteries, it augments channel permeability and may regulate of smooth muscle cell to endothelial cell communication. Acetylated in the developing cortex; leading to delocalization from the cell membrane.

It localises to the cell membrane. The protein localises to the cell junction. The protein resides in the gap junction. Its subcellular location is the endoplasmic reticulum. Gap junction protein that acts as a regulator of bladder capacity. A gap junction consists of a cluster of closely packed pairs of transmembrane channels, the connexons, through which materials of low MW diffuse from one cell to a neighboring cell. May play a critical role in the physiology of hearing by participating in the recycling of potassium to the cochlear endolymph. Negative regulator of bladder functional capacity: acts by enhancing intercellular electrical and chemical transmission, thus sensitizing bladder muscles to cholinergic neural stimuli and causing them to contract. May play a role in cell growth inhibition through the regulation of NOV expression and localization. Plays an essential role in gap junction communication in the ventricles. This is Gap junction alpha-1 protein (GJA1) from Erinaceus europaeus (Western European hedgehog).